The chain runs to 605 residues: Anaerobic ribonucleoside-triphosphate reductase (605 aa).

Positions 64 and 66 each coordinate dCTP. 5 residues coordinate dGTP: His64, His66, Asp67, Glu100, and Lys103. Residues Glu100, Lys103, Gln114, Lys146, and 445 to 448 each bind dCTP; that span reads AENL. 4 residues coordinate dATP: Glu100, Lys103, Gln114, and Lys146. Glu100 contacts dTTP. DTTP-binding residues include Gln114 and Lys146. Residues Lys146, Asn447, and Leu448 each contribute to the dGTP site. A Glycine radical domain is found at 482 to 605; sequence ENITPFEKIS…KEIMHRVKHQ (124 aa). Zn(2+)-binding residues include Cys543, Cys546, Cys561, and Cys564. A Glycine radical modification is found at Gly580.

It belongs to the anaerobic ribonucleoside-triphosphate reductase family. Homodimer. Forms a tetramer composed of two NrdD and two NrdG subunits.

It carries out the reaction a ribonucleoside 5'-triphosphate + formate + H(+) = a 2'-deoxyribonucleoside 5'-triphosphate + CO2 + H2O. With respect to regulation, activated under anaerobic conditions by NrdG, a tightly associated activase. Activation involves the formation of a glycyl radical at Gly-580. In terms of biological role, catalyzes the conversion of ribonucleotides into deoxyribonucleotides, which are required for DNA synthesis and repair. The chain is Anaerobic ribonucleoside-triphosphate reductase from Enterobacteria phage T4 (Bacteriophage T4).